The primary structure comprises 474 residues: 3-isopropylmalate dehydratase large subunit (474 aa).

Positions 353, 413, and 416 each coordinate [4Fe-4S] cluster.

It belongs to the aconitase/IPM isomerase family. LeuC type 1 subfamily. Heterodimer of LeuC and LeuD. It depends on [4Fe-4S] cluster as a cofactor.

The enzyme catalyses (2R,3S)-3-isopropylmalate = (2S)-2-isopropylmalate. Its pathway is amino-acid biosynthesis; L-leucine biosynthesis; L-leucine from 3-methyl-2-oxobutanoate: step 2/4. Catalyzes the isomerization between 2-isopropylmalate and 3-isopropylmalate, via the formation of 2-isopropylmaleate. The polypeptide is 3-isopropylmalate dehydratase large subunit (Roseiflexus sp. (strain RS-1)).